Here is a 583-residue protein sequence, read N- to C-terminus: Long-chain-fatty-acid--AMP ligase FadD26 (583 aa).

This sequence belongs to the ATP-dependent AMP-binding enzyme family.

It catalyses the reaction holo-[(phenol)carboxyphthiodiolenone synthase] + a long-chain fatty acid + ATP = a long-chain fatty acyl-[(phenol)carboxyphthiodiolenone synthase] + AMP + diphosphate. The catalysed reaction is eicosanoate + holo-[(phenol)carboxyphthiodiolenone synthase] + ATP = icosanoyl-[(phenol)carboxyphthiodiolenone synthase] + AMP + diphosphate. It carries out the reaction holo-[(phenol)carboxyphthiodiolenone synthase] + docosanoate + ATP = docosanoyl-[(phenol)carboxyphthiodiolenone synthase] + AMP + diphosphate. The protein operates within lipid metabolism; fatty acid biosynthesis. In terms of biological role, catalyzes the activation of long-chain fatty acids as acyl-adenylates (acyl-AMP), which are then transferred to the multifunctional polyketide synthase PpsA for further chain extension. Catalyzes the adenylation of the long-chain fatty acids eicosanoate (C20) or docosanoate (C22), and potentially the very-long-chain fatty acid lignocerate (C24). Involved in the biosynthesis of phthiocerol dimycocerosate (DIM A) and phthiodiolone dimycocerosate (DIM B). The chain is Long-chain-fatty-acid--AMP ligase FadD26 (fadD26) from Mycobacterium bovis (strain ATCC BAA-935 / AF2122/97).